Here is a 302-residue protein sequence, read N- to C-terminus: Ribonucleoside-diphosphate reductase small subunit (302 aa).

Positions 61, 91, and 94 each coordinate Fe cation. Tyr98 is an active-site residue. Residues 147 to 167 form a helical membrane-spanning segment; sequence ILVFLLIEGIFFISSFYSIAL. Residues Glu154, Glu188, and His191 each contribute to the Fe cation site.

The protein belongs to the ribonucleoside diphosphate reductase small chain family. Heterotetramer composed of a homodimer of the large subunit (R1) and a homodimer of the small subunit (R2). Larger multisubunit protein complex are also active, composed of (R1)n(R2)n. Requires Fe cation as cofactor.

Its subcellular location is the host membrane. It catalyses the reaction a 2'-deoxyribonucleoside 5'-diphosphate + [thioredoxin]-disulfide + H2O = a ribonucleoside 5'-diphosphate + [thioredoxin]-dithiol. Its function is as follows. Ribonucleoside-diphosphate reductase holoenzyme provides the precursors necessary for viral DNA synthesis. Allows virus growth in non-dividing cells, as well as reactivation from latency in infected hosts. Catalyzes the biosynthesis of deoxyribonucleotides from the corresponding ribonucleotides. This is Ribonucleoside-diphosphate reductase small subunit from Homo sapiens (Human).